A 213-amino-acid chain; its full sequence is uncharacterized protein (213 aa).

A CS domain is found at 2–91 (SRHPEVKWAQ…AEAKWWKKLV (90 aa)). Residues 168–213 (GMGGMGGMDEFEDESDDEEEVSKPQDAEKAAEAGKSQESDAKAETS) form a disordered region. Over residues 176–187 (DEFEDESDDEEE) the composition is skewed to acidic residues. Basic and acidic residues predominate over residues 188–213 (VSKPQDAEKAAEAGKSQESDAKAETS).

It belongs to the p23/wos2 family.

This is an uncharacterized protein from Oryza sativa subsp. japonica (Rice).